A 293-amino-acid polypeptide reads, in one-letter code: Nucleotide-binding protein Csac_1160 (293 aa).

An ATP-binding site is contributed by 11 to 18 (GMSGAGKS). 62 to 65 (DIRG) provides a ligand contact to GTP.

Belongs to the RapZ-like family.

In terms of biological role, displays ATPase and GTPase activities. This chain is Nucleotide-binding protein Csac_1160, found in Caldicellulosiruptor saccharolyticus (strain ATCC 43494 / DSM 8903 / Tp8T 6331).